Consider the following 149-residue polypeptide: Nucleoside diphosphate kinase (149 aa).

ATP-binding residues include lysine 9, phenylalanine 57, arginine 85, threonine 91, arginine 102, and asparagine 112. The active-site Pros-phosphohistidine intermediate is the histidine 115.

The protein belongs to the NDK family. In terms of assembly, homotetramer. It depends on Mg(2+) as a cofactor.

Its subcellular location is the cytoplasm. It catalyses the reaction a 2'-deoxyribonucleoside 5'-diphosphate + ATP = a 2'-deoxyribonucleoside 5'-triphosphate + ADP. The enzyme catalyses a ribonucleoside 5'-diphosphate + ATP = a ribonucleoside 5'-triphosphate + ADP. Its function is as follows. Major role in the synthesis of nucleoside triphosphates other than ATP. The ATP gamma phosphate is transferred to the NDP beta phosphate via a ping-pong mechanism, using a phosphorylated active-site intermediate. The sequence is that of Nucleoside diphosphate kinase from Roseiflexus castenholzii (strain DSM 13941 / HLO8).